Here is a 414-residue protein sequence, read N- to C-terminus: Histidine--tRNA ligase (414 aa).

It belongs to the class-II aminoacyl-tRNA synthetase family. As to quaternary structure, homodimer.

Its subcellular location is the cytoplasm. It catalyses the reaction tRNA(His) + L-histidine + ATP = L-histidyl-tRNA(His) + AMP + diphosphate + H(+). The polypeptide is Histidine--tRNA ligase (hisS) (Mycoplasma genitalium (strain ATCC 33530 / DSM 19775 / NCTC 10195 / G37) (Mycoplasmoides genitalium)).